A 285-amino-acid chain; its full sequence is Coagulation factor IX (285 aa).

Tyrosine 23 bears the Sulfotyrosine mark. Residue asparagine 25 is glycosylated (N-linked (GlcNAc...) asparagine). Threonine 27 carries the phosphothreonine; alternate modification. Threonine 27 is a glycosylation site (O-linked (GalNAc...) threonine; alternate). Asparagine 45 carries an N-linked (GlcNAc...) asparagine glycan. A glycan (O-linked (GalNAc...) threonine) is linked at threonine 47. The Peptidase S1 domain occupies valine 59–tryptophan 285. Cysteine 84 and cysteine 100 are oxidised to a cystine. Residue histidine 99 is the Charge relay system of the active site. Ca(2+)-binding residues include asparagine 115, glutamate 120, and glutamate 123. 2 N-linked (GlcNAc...) asparagine glycosylation sites follow: asparagine 127 and asparagine 138. Aspartate 147 acts as the Charge relay system in catalysis. Cystine bridges form between cysteine 214/cysteine 228 and cysteine 239/cysteine 267. Residue serine 243 is the Charge relay system of the active site.

It belongs to the peptidase S1 family. As to quaternary structure, heterodimer of a light chain and a heavy chain; disulfide-linked. Interacts (inactive and activated) with F11 (activated) in calcium-dependent manner. Interacts with SERPINC1. Activated by factor XIa, which excises the activation peptide. The propeptide can also be removed by snake venom protease. Activated by coagulation factor VIIa-tissue factor (F7-F3) complex in calcium-dependent manner.

Its subcellular location is the secreted. The catalysed reaction is Selective cleavage of Arg-|-Ile bond in factor X to form factor Xa.. Factor IX is a vitamin K-dependent plasma protein that participates in the intrinsic pathway of blood coagulation by converting factor X to its active form in the presence of Ca(2+) ions, phospholipids, and factor VIIIa. The sequence is that of Coagulation factor IX (F9) from Cavia porcellus (Guinea pig).